Reading from the N-terminus, the 172-residue chain is Shikimate kinase (172 aa).

An ATP-binding site is contributed by 14 to 19 (GAGKST). Serine 18 contacts Mg(2+). Substrate-binding residues include aspartate 36, arginine 60, and glycine 82. Arginine 120 lines the ATP pocket. Residue arginine 140 participates in substrate binding. Residue glutamine 157 participates in ATP binding.

It belongs to the shikimate kinase family. As to quaternary structure, monomer. Requires Mg(2+) as cofactor.

The protein localises to the cytoplasm. The enzyme catalyses shikimate + ATP = 3-phosphoshikimate + ADP + H(+). It participates in metabolic intermediate biosynthesis; chorismate biosynthesis; chorismate from D-erythrose 4-phosphate and phosphoenolpyruvate: step 5/7. In terms of biological role, catalyzes the specific phosphorylation of the 3-hydroxyl group of shikimic acid using ATP as a cosubstrate. The sequence is that of Shikimate kinase from Colwellia psychrerythraea (strain 34H / ATCC BAA-681) (Vibrio psychroerythus).